A 152-amino-acid chain; its full sequence is Large ribosomal subunit protein uL15 (152 aa).

A disordered region spans residues 1-66 (MLQLHTIKPN…PLHRRLPKKG (66 aa)). Gly residues predominate over residues 24 to 36 (ESSGLGKTCGKGN).

The protein belongs to the universal ribosomal protein uL15 family. In terms of assembly, part of the 50S ribosomal subunit.

Its function is as follows. Binds to the 23S rRNA. This is Large ribosomal subunit protein uL15 from Akkermansia muciniphila (strain ATCC BAA-835 / DSM 22959 / JCM 33894 / BCRC 81048 / CCUG 64013 / CIP 107961 / Muc).